A 174-amino-acid chain; its full sequence is MQHFESSDKIEKDDDTSRIKLRSSSLAAPILEAVQEAQPFEEATFSNLQKIHPLTENSTCNGYVIYDKDGNLKSMKDTFGRNIKTPDISNPTRARNERPLDTIRGFEYSITKDPRWLQELETSKLGFKPRPGFAVINQDSQASINLSQLEEKVMESQKKKEKRHISRLSRLLCR.

The disordered stretch occupies residues 78–97 (TFGRNIKTPDISNPTRARNE).

To yeast YMR295c.

This is an uncharacterized protein from Saccharomyces cerevisiae (strain ATCC 204508 / S288c) (Baker's yeast).